Reading from the N-terminus, the 430-residue chain is Asparagine--tRNA ligase (430 aa).

Belongs to the class-II aminoacyl-tRNA synthetase family. As to quaternary structure, homodimer.

The protein resides in the cytoplasm. The catalysed reaction is tRNA(Asn) + L-asparagine + ATP = L-asparaginyl-tRNA(Asn) + AMP + diphosphate + H(+). This is Asparagine--tRNA ligase from Bacillus licheniformis (strain ATCC 14580 / DSM 13 / JCM 2505 / CCUG 7422 / NBRC 12200 / NCIMB 9375 / NCTC 10341 / NRRL NRS-1264 / Gibson 46).